Consider the following 312-residue polypeptide: Malate dehydrogenase (312 aa).

NAD(+)-binding positions include 12 to 17 and Asp-36; that span reads GAGFTG. 2 residues coordinate substrate: Arg-87 and Arg-93. Residues Asn-100 and 123–125 each bind NAD(+); that span reads LTN. Asn-125 contributes to the substrate binding site. Position 149 is a phosphoserine (Ser-149). Residue Arg-156 coordinates substrate. His-180 serves as the catalytic Proton acceptor.

The protein belongs to the LDH/MDH superfamily. MDH type 3 family.

The catalysed reaction is (S)-malate + NAD(+) = oxaloacetate + NADH + H(+). In terms of biological role, catalyzes the reversible oxidation of malate to oxaloacetate. This Geobacillus sp. (strain WCH70) protein is Malate dehydrogenase.